Reading from the N-terminus, the 157-residue chain is E3 ubiquitin-protein ligase RHA1B (157 aa).

The RING-type; atypical zinc finger occupies 85 to 129 (CTVCLSDFVSDDKIRQLPKCGHVFHHRCLDRWIVDCNKITCPICR).

The catalysed reaction is S-ubiquitinyl-[E2 ubiquitin-conjugating enzyme]-L-cysteine + [acceptor protein]-L-lysine = [E2 ubiquitin-conjugating enzyme]-L-cysteine + N(6)-ubiquitinyl-[acceptor protein]-L-lysine.. The protein operates within protein modification; protein ubiquitination. In terms of biological role, possesses E3 ubiquitin-protein ligase activity when associated with the E2 enzyme UBC8 in vitro. The polypeptide is E3 ubiquitin-protein ligase RHA1B (Arabidopsis thaliana (Mouse-ear cress)).